Here is a 459-residue protein sequence, read N- to C-terminus: Argininosuccinate lyase (459 aa).

Belongs to the lyase 1 family. Argininosuccinate lyase subfamily.

The protein localises to the cytoplasm. The catalysed reaction is 2-(N(omega)-L-arginino)succinate = fumarate + L-arginine. Its pathway is amino-acid biosynthesis; L-arginine biosynthesis; L-arginine from L-ornithine and carbamoyl phosphate: step 3/3. The protein is Argininosuccinate lyase of Staphylococcus aureus (strain Mu3 / ATCC 700698).